Consider the following 201-residue polypeptide: Recombination protein RecR (201 aa).

The C4-type zinc-finger motif lies at 58–73 (CGRCGALTDVDPCGIC). In terms of domain architecture, Toprim spans 81-178 (ETLCLVSEWD…RVTRLAQGIP (98 aa)).

It belongs to the RecR family.

Its function is as follows. May play a role in DNA repair. It seems to be involved in an RecBC-independent recombinational process of DNA repair. It may act with RecF and RecO. The sequence is that of Recombination protein RecR from Nitratidesulfovibrio vulgaris (strain DSM 19637 / Miyazaki F) (Desulfovibrio vulgaris).